Consider the following 448-residue polypeptide: Methylenetetrahydrofolate--tRNA-(uracil-5-)-methyltransferase TrmFO (448 aa).

13–18 contacts FAD; that stretch reads GAGLAG.

It belongs to the MnmG family. TrmFO subfamily. FAD serves as cofactor.

The protein resides in the cytoplasm. The enzyme catalyses uridine(54) in tRNA + (6R)-5,10-methylene-5,6,7,8-tetrahydrofolate + NADH + H(+) = 5-methyluridine(54) in tRNA + (6S)-5,6,7,8-tetrahydrofolate + NAD(+). It carries out the reaction uridine(54) in tRNA + (6R)-5,10-methylene-5,6,7,8-tetrahydrofolate + NADPH + H(+) = 5-methyluridine(54) in tRNA + (6S)-5,6,7,8-tetrahydrofolate + NADP(+). Functionally, catalyzes the folate-dependent formation of 5-methyl-uridine at position 54 (M-5-U54) in all tRNAs. In Streptococcus pyogenes serotype M3 (strain ATCC BAA-595 / MGAS315), this protein is Methylenetetrahydrofolate--tRNA-(uracil-5-)-methyltransferase TrmFO.